Here is a 79-residue protein sequence, read N- to C-terminus: D-alanyl carrier protein (79 aa).

The Carrier domain occupies 1 to 77; that stretch reads MDTKQGVLDI…KIVAKVESLE (77 aa). Position 35 is an O-(pantetheine 4'-phosphoryl)serine (Ser-35).

It belongs to the DltC family. Post-translationally, 4'-phosphopantetheine is transferred from CoA to a specific serine of apo-DCP.

Its subcellular location is the cytoplasm. It functions in the pathway cell wall biogenesis; lipoteichoic acid biosynthesis. In terms of biological role, carrier protein involved in the D-alanylation of lipoteichoic acid (LTA). The loading of thioester-linked D-alanine onto DltC is catalyzed by D-alanine--D-alanyl carrier protein ligase DltA. The DltC-carried D-alanyl group is further transferred to cell membrane phosphatidylglycerol (PG) by forming an ester bond, probably catalyzed by DltD. D-alanylation of LTA plays an important role in modulating the properties of the cell wall in Gram-positive bacteria, influencing the net charge of the cell wall. This is D-alanyl carrier protein from Lactobacillus helveticus (strain DPC 4571).